We begin with the raw amino-acid sequence, 71 residues long: NAD(P)H-quinone oxidoreductase subunit O (71 aa).

The protein belongs to the complex I NdhO subunit family. NDH-1 can be composed of about 15 different subunits; different subcomplexes with different compositions have been identified which probably have different functions.

Its subcellular location is the cellular thylakoid membrane. It catalyses the reaction a plastoquinone + NADH + (n+1) H(+)(in) = a plastoquinol + NAD(+) + n H(+)(out). It carries out the reaction a plastoquinone + NADPH + (n+1) H(+)(in) = a plastoquinol + NADP(+) + n H(+)(out). Its function is as follows. NDH-1 shuttles electrons from an unknown electron donor, via FMN and iron-sulfur (Fe-S) centers, to quinones in the respiratory and/or the photosynthetic chain. The immediate electron acceptor for the enzyme in this species is believed to be plastoquinone. Couples the redox reaction to proton translocation, and thus conserves the redox energy in a proton gradient. Cyanobacterial NDH-1 also plays a role in inorganic carbon-concentration. This chain is NAD(P)H-quinone oxidoreductase subunit O, found in Microcystis aeruginosa (strain NIES-843 / IAM M-2473).